The following is a 360-amino-acid chain: Protein DVR-1 (360 aa).

Positions 1 to 16 (MVWLRLWAFLHILAIV) are cleaved as a signal peptide. A propeptide spanning residues 17–246 (TLDPELKRRE…LRCKRPRRKR (230 aa)) is cleaved from the precursor. Residues Asn113, Asn181, and Asn301 are each glycosylated (N-linked (GlcNAc...) asparagine). Cystine bridges form between Cys259-Cys325, Cys288-Cys357, and Cys292-Cys359.

This sequence belongs to the TGF-beta family. In terms of assembly, homodimer. As to expression, vegetal region of the egg.

It localises to the secreted. In terms of biological role, serves to facilitate the differentiation of either mesoderm or endoderm either as a cofactor in an instructive signal or by providing permissive environment. In Xenopus laevis (African clawed frog), this protein is Protein DVR-1 (dvr1).